We begin with the raw amino-acid sequence, 339 residues long: Fructose-1,6-bisphosphatase class 1 (339 aa).

Mg(2+) is bound by residues glutamate 94, aspartate 116, leucine 118, and aspartate 119. Residues 119-122 (DGSS), asparagine 210, and lysine 276 contribute to the substrate site. Glutamate 282 lines the Mg(2+) pocket.

It belongs to the FBPase class 1 family. In terms of assembly, homotetramer. Requires Mg(2+) as cofactor.

It localises to the cytoplasm. The catalysed reaction is beta-D-fructose 1,6-bisphosphate + H2O = beta-D-fructose 6-phosphate + phosphate. The protein operates within carbohydrate biosynthesis; gluconeogenesis. In Burkholderia ambifaria (strain ATCC BAA-244 / DSM 16087 / CCUG 44356 / LMG 19182 / AMMD) (Burkholderia cepacia (strain AMMD)), this protein is Fructose-1,6-bisphosphatase class 1.